The sequence spans 151 residues: SsrA-binding protein (151 aa).

The protein belongs to the SmpB family.

It is found in the cytoplasm. In terms of biological role, required for rescue of stalled ribosomes mediated by trans-translation. Binds to transfer-messenger RNA (tmRNA), required for stable association of tmRNA with ribosomes. tmRNA and SmpB together mimic tRNA shape, replacing the anticodon stem-loop with SmpB. tmRNA is encoded by the ssrA gene; the 2 termini fold to resemble tRNA(Ala) and it encodes a 'tag peptide', a short internal open reading frame. During trans-translation Ala-aminoacylated tmRNA acts like a tRNA, entering the A-site of stalled ribosomes, displacing the stalled mRNA. The ribosome then switches to translate the ORF on the tmRNA; the nascent peptide is terminated with the 'tag peptide' encoded by the tmRNA and targeted for degradation. The ribosome is freed to recommence translation, which seems to be the essential function of trans-translation. This chain is SsrA-binding protein, found in Nitrosomonas europaea (strain ATCC 19718 / CIP 103999 / KCTC 2705 / NBRC 14298).